The following is a 688-amino-acid chain: Polyphosphate kinase (688 aa).

Asparagine 45 contributes to the ATP binding site. Positions 375 and 405 each coordinate Mg(2+). Residues 430–464 form the PLD phosphodiesterase domain; it reads PGLKIHAKLFLISRKENGEVVRYAHIGTGNFNEKT. Residue histidine 435 is the Phosphohistidine intermediate of the active site. Tyrosine 468, arginine 564, and histidine 592 together coordinate ATP.

This sequence belongs to the polyphosphate kinase 1 (PPK1) family. It depends on Mg(2+) as a cofactor. An intermediate of this reaction is the autophosphorylated ppk in which a phosphate is covalently linked to a histidine residue through a N-P bond.

The enzyme catalyses [phosphate](n) + ATP = [phosphate](n+1) + ADP. Functionally, catalyzes the reversible transfer of the terminal phosphate of ATP to form a long-chain polyphosphate (polyP). The protein is Polyphosphate kinase of Escherichia coli O157:H7.